A 320-amino-acid polypeptide reads, in one-letter code: Nod factor export ATP-binding protein I (320 aa).

In terms of domain architecture, ABC transporter spans 15–245 (VSATGVWKKR…LGALKILEID (231 aa)). 47-54 (GTNGAGKS) serves as a coordination point for ATP.

It belongs to the ABC transporter superfamily. Lipooligosaccharide exporter (TC 3.A.1.102) family. In terms of assembly, the complex is composed of two ATP-binding proteins (NodI) and two transmembrane proteins (NodJ).

It is found in the cell inner membrane. Its function is as follows. Part of the ABC transporter complex NodIJ involved in the export of the nodulation factors (Nod factors), the bacterial signal molecules that induce symbiosis and subsequent nodulation induction. Nod factors are LCO (lipo-chitin oligosaccharide), a modified beta-1,4-linked N-acetylglucosamine oligosaccharide. This subunit is responsible for energy coupling to the transport system. The chain is Nod factor export ATP-binding protein I from Azorhizobium caulinodans (strain ATCC 43989 / DSM 5975 / JCM 20966 / LMG 6465 / NBRC 14845 / NCIMB 13405 / ORS 571).